We begin with the raw amino-acid sequence, 115 residues long: Large ribosomal subunit protein bL19 (115 aa).

The protein belongs to the bacterial ribosomal protein bL19 family.

Its function is as follows. This protein is located at the 30S-50S ribosomal subunit interface and may play a role in the structure and function of the aminoacyl-tRNA binding site. This chain is Large ribosomal subunit protein bL19, found in Akkermansia muciniphila (strain ATCC BAA-835 / DSM 22959 / JCM 33894 / BCRC 81048 / CCUG 64013 / CIP 107961 / Muc).